Consider the following 687-residue polypeptide: Glycine--tRNA ligase beta subunit (687 aa).

The protein belongs to the class-II aminoacyl-tRNA synthetase family. Tetramer of two alpha and two beta subunits.

The protein resides in the cytoplasm. The enzyme catalyses tRNA(Gly) + glycine + ATP = glycyl-tRNA(Gly) + AMP + diphosphate. This Neisseria meningitidis serogroup A / serotype 4A (strain DSM 15465 / Z2491) protein is Glycine--tRNA ligase beta subunit.